A 243-amino-acid chain; its full sequence is uncharacterized protein (243 aa).

The GP-PDE domain occupies 2–240; the sequence is TKIFAHRGAS…DFPEKASALL (239 aa).

This is an uncharacterized protein from Bacillus subtilis (strain 168).